The chain runs to 178 residues: Oligoribonuclease (178 aa).

The region spanning 7–168 (LIWIDLEMTG…DDIRESIAEL (162 aa)) is the Exonuclease domain. Residue Tyr128 is part of the active site.

This sequence belongs to the oligoribonuclease family.

The protein localises to the cytoplasm. Its function is as follows. 3'-to-5' exoribonuclease specific for small oligoribonucleotides. In Pseudomonas syringae pv. tomato (strain ATCC BAA-871 / DC3000), this protein is Oligoribonuclease.